The chain runs to 495 residues: Potassium voltage-gated channel subfamily A member 1 (495 aa).

The segment at 1 to 30 is disordered; the sequence is MTVMSGENVDEASAAPGHPQDGSYPRQADH. The interval 1–128 is tetramerization domain; sequence MTVMSGENVD…FYELGEEAME (128 aa). Residues 1–164 are Cytoplasmic-facing; it reads MTVMSGENVD…LLFEYPESSG (164 aa). The residue at position 23 (Ser23) is a Phosphoserine. Residues 165–186 form a helical membrane-spanning segment; that stretch reads PARVIAIVSVMVILISIVIFCL. Topologically, residues 187–220 are extracellular; the sequence is ETLPELKDDKDFTGTVHRIDNTTVIYNSNIFTDP. A glycan (N-linked (GlcNAc...) asparagine) is linked at Asn207. Residues 221–242 form a helical membrane-spanning segment; the sequence is FFIVETLCIIWFSFELVVRFFA. A lipid anchor (S-palmitoyl cysteine) is attached at Cys243. At 243 to 253 the chain is on the cytoplasmic side; the sequence is CPSKTDFFKNI. The chain crosses the membrane as a helical span at residues 254-274; sequence MNFIDIVAIIPYFITLGTEIA. The Extracellular segment spans residues 275–287; sequence EQEGNQKGEQATS. A helical; Voltage-sensor membrane pass occupies residues 288–308; the sequence is LAILRVIRLVRVFRIFKLSRH. The Cytoplasmic portion of the chain corresponds to 309–323; that stretch reads SKGLQILGQTLKASM. The segment at 310–323 is S4-S5 linker; the sequence is KGLQILGQTLKASM. Ser322 is modified (phosphoserine; by PKA). Residues 324 to 345 form a helical membrane-spanning segment; that stretch reads RELGLLIFFLFIGVILFSSAVY. The Extracellular segment spans residues 346-359; that stretch reads FAEAEEAESHFSSI. Residues 360 to 371 constitute an intramembrane region (helical); that stretch reads PDAFWWAVVSMT. A Selectivity filter motif is present at residues 372–377; the sequence is TVGYGD. The stretch at 372 to 379 is an intramembrane region; it reads TVGYGDMY. Topologically, residues 380–386 are extracellular; that stretch reads PVTIGGK. The chain crosses the membrane as a helical span at residues 387–415; the sequence is IVGSLCAIAGVLTIALPVPVIVSNFNYFY. Over 416-495 the chain is Cytoplasmic; the sequence is HRETEGEEQA…VNKSKLLTDV (80 aa). Phosphoserine occurs at positions 437 and 439. Ser446 is subject to Phosphoserine; by PKA. Positions 493 to 495 match the PDZ-binding motif; sequence TDV.

This sequence belongs to the potassium channel family. A (Shaker) (TC 1.A.1.2) subfamily. Kv1.1/KCNA1 sub-subfamily. As to quaternary structure, homotetramer and heterotetramer with other channel-forming alpha subunits, such as KCNA2, KCNA4, KCNA5, KCNA6 and KCNA7. Channel activity is regulated by interaction with the beta subunits KCNAB1 and KCNAB2. Identified in a complex with KCNA2 and KCNAB2. Interacts (via C-terminus) with the PDZ domains of DLG1, DLG2 and DLG4. Interacts with LGI1 within a complex containing LGI1, KCNA4 and KCNAB1. Interacts (via N-terminus) with STX1A; this promotes channel inactivation. Interacts (via N-terminus) with the heterodimer formed by GNB1 and GNG2; this promotes channel inactivation. Can interact simultaneously with STX1A and the heterodimer formed by GNB1 and GNG2. Interacts (via cytoplasmic N-terminal domain) with KCNRG; this inhibits channel activity. Interacts with ANK3; this inhibits channel activity. Interacts with ADAM11. In terms of processing, N-glycosylated. Palmitoylated on Cys-243; which may be required for membrane targeting. Post-translationally, phosphorylated on tyrosine residues. Phosphorylation increases in response to NRG1; this inhibits channel activity. Phosphorylation at Ser-446 regulates channel activity by down-regulating expression at the cell membrane. In terms of tissue distribution, detected adjacent to nodes of Ranvier in juxtaparanodal zones in spinal cord nerve fibers, but also in paranodal regions in some myelinated spinal cord axons (at protein level). Detected in the islet of Langerhans.

The protein resides in the cell membrane. The protein localises to the membrane. It is found in the cell projection. It localises to the axon. Its subcellular location is the cytoplasmic vesicle. The protein resides in the perikaryon. The protein localises to the endoplasmic reticulum. It is found in the dendrite. It localises to the cell junction. Its subcellular location is the synapse. The protein resides in the presynaptic cell membrane. The protein localises to the presynapse. It catalyses the reaction K(+)(in) = K(+)(out). Inhibited by 1.1 mM 4-aminopyridine (4-AP) and by 20 mM tetraethylammonium (TEA), but not by charybdotoxin (CTX). Inhibited by dendrotoxin (DTX). In terms of biological role, voltage-gated potassium channel that mediates transmembrane potassium transport in excitable membranes, primarily in the brain and the central nervous system, but also in the kidney. Contributes to the regulation of the membrane potential and nerve signaling, and prevents neuronal hyperexcitability. Forms tetrameric potassium-selective channels through which potassium ions pass in accordance with their electrochemical gradient. The channel alternates between opened and closed conformations in response to the voltage difference across the membrane. Can form functional homotetrameric channels and heterotetrameric channels that contain variable proportions of KCNA1, KCNA2, KCNA4, KCNA5, KCNA6, KCNA7, and possibly other family members as well; channel properties depend on the type of alpha subunits that are part of the channel. Channel properties are modulated by cytoplasmic beta subunits that regulate the subcellular location of the alpha subunits and promote rapid inactivation of delayed rectifier potassium channels. In vivo, membranes probably contain a mixture of heteromeric potassium channel complexes, making it difficult to assign currents observed in intact tissues to any particular potassium channel family member. Homotetrameric KCNA1 forms a delayed-rectifier potassium channel that opens in response to membrane depolarization, followed by slow spontaneous channel closure. In contrast, a heterotetrameric channel formed by KCNA1 and KCNA4 shows rapid inactivation. Regulates neuronal excitability in hippocampus, especially in mossy fibers and medial perforant path axons, preventing neuronal hyperexcitability. Response to toxins that are selective for KCNA1, respectively for KCNA2, suggests that heteromeric potassium channels composed of both KCNA1 and KCNA2 play a role in pacemaking and regulate the output of deep cerebellar nuclear neurons. May function as down-stream effector for G protein-coupled receptors and inhibit GABAergic inputs to basolateral amygdala neurons. May contribute to the regulation of neurotransmitter release, such as gamma-aminobutyric acid (GABA) release. Plays a role in regulating the generation of action potentials and preventing hyperexcitability in myelinated axons of the vagus nerve, and thereby contributes to the regulation of heart contraction. Required for normal neuromuscular responses. Regulates the frequency of neuronal action potential firing in response to mechanical stimuli, and plays a role in the perception of pain caused by mechanical stimuli, but does not play a role in the perception of pain due to heat stimuli. Required for normal responses to auditory stimuli and precise location of sound sources, but not for sound perception. The use of toxins that block specific channels suggest that it contributes to the regulation of the axonal release of the neurotransmitter dopamine. Required for normal postnatal brain development and normal proliferation of neuronal precursor cells in the brain. Plays a role in the reabsorption of Mg(2+) in the distal convoluted tubules in the kidney and in magnesium ion homeostasis, probably via its effect on the membrane potential. This is Potassium voltage-gated channel subfamily A member 1 from Homo sapiens (Human).